The following is a 622-amino-acid chain: 1-deoxy-D-xylulose-5-phosphate synthase (622 aa).

Thiamine diphosphate contacts are provided by residues His80 and 121 to 123 (GHS). Residue Asp152 coordinates Mg(2+). Thiamine diphosphate contacts are provided by residues 153-154 (GA), Asn181, Tyr288, and Glu370. Asn181 lines the Mg(2+) pocket.

Belongs to the transketolase family. DXPS subfamily. As to quaternary structure, homodimer. Mg(2+) is required as a cofactor. It depends on thiamine diphosphate as a cofactor.

It catalyses the reaction D-glyceraldehyde 3-phosphate + pyruvate + H(+) = 1-deoxy-D-xylulose 5-phosphate + CO2. It functions in the pathway metabolic intermediate biosynthesis; 1-deoxy-D-xylulose 5-phosphate biosynthesis; 1-deoxy-D-xylulose 5-phosphate from D-glyceraldehyde 3-phosphate and pyruvate: step 1/1. Functionally, catalyzes the acyloin condensation reaction between C atoms 2 and 3 of pyruvate and glyceraldehyde 3-phosphate to yield 1-deoxy-D-xylulose-5-phosphate (DXP). This is 1-deoxy-D-xylulose-5-phosphate synthase from Shewanella baltica (strain OS195).